Consider the following 3133-residue polypeptide: Cysteine repeat modular protein A (3133 aa).

The interval 1–39 (MDSASTSMSRVHPSGVYRRPLLPSGGPRSTSERDERVDL) is disordered. Over residues 30-39 (TSERDERVDL) the composition is skewed to basic and acidic residues. A helical membrane pass occupies residues 123–143 (LFLLFSSSPLLLLLLLHQFFI). Basic and acidic residues-rich tracts occupy residues 173–211 (TFEE…DGKE) and 301–311 (NESEKAERARL). Disordered regions lie at residues 173–234 (TFEE…EGRR) and 294–317 (VSPS…STPA). N-linked (GlcNAc...) asparagine glycosylation is found at asparagine 301, asparagine 392, and asparagine 470. One can recognise a Kringle domain in the interval 577-644 (DETLEQGKLY…DPHVRFDFCD (68 aa)). 2 disulfide bridges follow: cysteine 599/cysteine 631 and cysteine 620/cysteine 643. Asparagine 1364 and asparagine 1532 each carry an N-linked (GlcNAc...) asparagine glycan. 3 consecutive transmembrane segments (helical) span residues 2229-2249 (MVWN…FNIV), 2276-2296 (LTGI…PSWI), and 2339-2359 (VFYA…MSII). A glycan (N-linked (GlcNAc...) asparagine) is linked at asparagine 2369. 3 consecutive transmembrane segments (helical) span residues 2420–2440 (AAKF…FVYS), 2489–2509 (VGIT…FLVL), and 2539–2559 (WEMV…VALI). Residue asparagine 2565 is glycosylated (N-linked (GlcNAc...) asparagine). A helical transmembrane segment spans residues 2569–2589 (VWLAVVIAVIFLIIHLVTQPF). An N-linked (GlcNAc...) asparagine glycan is attached at asparagine 2602. The next 2 helical transmembrane spans lie at 2607–2627 (IWTI…SGSV) and 2632–2652 (LLFV…SLMF). Basic and acidic residues-rich tracts occupy residues 2827-2838 (FAAKDETPTAEE) and 3049-3069 (QEEN…DREI). Disordered regions lie at residues 2827 to 2847 (FAAK…DERL) and 3049 to 3101 (QEEN…LPEG). The stretch at 2955–3068 (SEALQKRNRK…KEEREEADRE (114 aa)) forms a coiled coil. Residues 3083 to 3094 (GEDDTATIDDSS) are compositionally biased toward acidic residues.

In terms of assembly, component of a complex, at least composed of cysteine repeat modular protein A (CRMPa), cysteine repeat modular protein B (CRMPb), micronemal protein 15 (MIC15) and thrombospondin type 1 domain-containing protein (TSP1).

It localises to the cell membrane. The protein resides in the endoplasmic reticulum. It is found in the golgi apparatus. Required for triggering rhoptry secretion. Plays a role in host cell invasion. In Toxoplasma gondii, this protein is Cysteine repeat modular protein A.